The sequence spans 372 residues: DNA replication and repair protein RecF (372 aa).

ATP is bound at residue 30–37 (GENAQGKT).

It belongs to the RecF family.

It localises to the cytoplasm. The RecF protein is involved in DNA metabolism; it is required for DNA replication and normal SOS inducibility. RecF binds preferentially to single-stranded, linear DNA. It also seems to bind ATP. The chain is DNA replication and repair protein RecF from Exiguobacterium sp. (strain ATCC BAA-1283 / AT1b).